Consider the following 132-residue polypeptide: RuBisCO chaperone RbcX (132 aa).

Residues H110–H132 are disordered. Positions L111–H132 are enriched in polar residues.

The protein belongs to the RbcX family. Homodimer. Interacts with the exposed C-terminal peptide of RbcL via its central cleft, contacts a second RbcL monomer via its peripheral polar surface. RbcX and Raf1 can bind simultaneously to RbcL.

Its subcellular location is the carboxysome. It is found in the cytoplasm. An RbcL-specific chaperone. The central cleft of the RbcX homodimer (RbcX2) binds the C-terminus of an RbcL monomer, stabilizing the C-terminus and probably preventing its reassociation with chaperonin GroEL-ES. At the same time the peripheral region of RbcX2 binds a second RbcL monomer, bridging the RbcL homodimers in the correct orientation. The RbcX2(2)-bound RbcL dimers then assemble into the RbcL8 core (RbcL8-(RbcX2)8). RbcS binding triggers the release of RbcX2. Its function is as follows. When rbcL-rbcX-rbcS or rbcL-rbcS were overexpressed in E.coli no change in reconstituted RuBisCO activity was observed, which suggests RbcX plays no role in RuBisCO assembly in this system. However in PubMed:8472962 E.coli chaperones groL and groS were also overexpressed, which may compensate for lack of rbcX. In Nostoc sp. (strain PCC 7120 / SAG 25.82 / UTEX 2576), this protein is RuBisCO chaperone RbcX.